The primary structure comprises 313 residues: MEEENATLLTEFVLTGFLYQPQWKIPLFLAFLVIYLITIMGNLGLIAVIWKDPHLHIPMYLLLGNLAFVDAWISSTVTPKMLNNFLAKSKMISLSECKIQFFSFAISVTTECFLLATMAYDRYVAICKPLLYPAIMTNGLCIRLLILSYVGGILHALIHEGFLFRLTFCNSNIVHHIYCDTIPLSKISCTDSSINFLMVFIFSGSIQVFSIVTILVSYTFVLFAILKKKSDKGVRKAFSTCGAHLFSVSLYYGPLLFIYVGPASPQADDQDMVEPLFYTVIIPLLNPIIYSLRNKQVTVSFTKMLKKHVKVSY.

The Extracellular segment spans residues 1–28 (MEEENATLLTEFVLTGFLYQPQWKIPLF). Residue Asn5 is glycosylated (N-linked (GlcNAc...) asparagine). Residues 29 to 49 (LAFLVIYLITIMGNLGLIAVI) traverse the membrane as a helical segment. At 50–56 (WKDPHLH) the chain is on the cytoplasmic side. The chain crosses the membrane as a helical span at residues 57-77 (IPMYLLLGNLAFVDAWISSTV). The Extracellular segment spans residues 78–98 (TPKMLNNFLAKSKMISLSECK). A disulfide bridge connects residues Cys97 and Cys179. Residues 99–119 (IQFFSFAISVTTECFLLATMA) traverse the membrane as a helical segment. The Cytoplasmic portion of the chain corresponds to 120 to 143 (YDRYVAICKPLLYPAIMTNGLCIR). The helical transmembrane segment at 144-164 (LLILSYVGGILHALIHEGFLF) threads the bilayer. Residues 165–195 (RLTFCNSNIVHHIYCDTIPLSKISCTDSSIN) lie on the Extracellular side of the membrane. A helical membrane pass occupies residues 196-216 (FLMVFIFSGSIQVFSIVTILV). At 217 to 240 (SYTFVLFAILKKKSDKGVRKAFST) the chain is on the cytoplasmic side. A helical transmembrane segment spans residues 241–261 (CGAHLFSVSLYYGPLLFIYVG). Over 262–271 (PASPQADDQD) the chain is Extracellular. Residues 272 to 292 (MVEPLFYTVIIPLLNPIIYSL) traverse the membrane as a helical segment. Residues 293–313 (RNKQVTVSFTKMLKKHVKVSY) lie on the Cytoplasmic side of the membrane.

This sequence belongs to the G-protein coupled receptor 1 family.

The protein localises to the cell membrane. Odorant receptor. The chain is Olfactory receptor 5H1 (OR5H1) from Homo sapiens (Human).